The chain runs to 188 residues: ATP synthase subunit b 1 (188 aa).

The helical transmembrane segment at 35–55 threads the bilayer; it reads VHFSSHFFWLAISFGFFYLFI.

This sequence belongs to the ATPase B chain family. In terms of assembly, F-type ATPases have 2 components, F(1) - the catalytic core - and F(0) - the membrane proton channel. F(1) has five subunits: alpha(3), beta(3), gamma(1), delta(1), epsilon(1). F(0) has three main subunits: a(1), b(2) and c(10-14). The alpha and beta chains form an alternating ring which encloses part of the gamma chain. F(1) is attached to F(0) by a central stalk formed by the gamma and epsilon chains, while a peripheral stalk is formed by the delta and b chains.

The protein localises to the cell inner membrane. Functionally, f(1)F(0) ATP synthase produces ATP from ADP in the presence of a proton or sodium gradient. F-type ATPases consist of two structural domains, F(1) containing the extramembraneous catalytic core and F(0) containing the membrane proton channel, linked together by a central stalk and a peripheral stalk. During catalysis, ATP synthesis in the catalytic domain of F(1) is coupled via a rotary mechanism of the central stalk subunits to proton translocation. Its function is as follows. Component of the F(0) channel, it forms part of the peripheral stalk, linking F(1) to F(0). The sequence is that of ATP synthase subunit b 1 from Bartonella tribocorum (strain CIP 105476 / IBS 506).